The chain runs to 426 residues: MLDLKRIRNNSNEIKEALNNRGEKFDVTVIDEVLKLDEERRNILVKVEVLKSKRNQVSSEVPKLKKEGKDVSNIVAEMKNLSEEIKGFDATLAKIDEKIQYIMLRIPNIPNPQVPDGETDEDNIEIRNWLEPTKFDFEPKAHWDIGTNLNILDFERAGKVTGSRFTFYKGLGARLERAVISYFLDTHTEKHGYTEILPPYMVNRTSMIGTGQLPKFEEDAFKISEDDYFLIPTAEVPVTNLYRDEILKGDELPLKHVAYSACFRSEAGSAGRDTRGLVRQHQFNKVELVKFTKPEQSYEELEKLTNDAETVLKELGIPYRVVRICKGDLGFTAALKYDLEVWMPSYNRYVEISSCSNFEDFQARRANIRYKEDAKAKPQYVHTLNGSGVAIGRTVAAILENYQSEDGSVTIPEVLRPYMGGREVIK.

Residue 233–235 coordinates L-serine; the sequence is TAE. 264–266 is an ATP binding site; that stretch reads RSE. An L-serine-binding site is contributed by Glu287. 351–354 contacts ATP; that stretch reads EISS. Ser387 contacts L-serine.

This sequence belongs to the class-II aminoacyl-tRNA synthetase family. Type-1 seryl-tRNA synthetase subfamily. Homodimer. The tRNA molecule binds across the dimer.

It is found in the cytoplasm. It catalyses the reaction tRNA(Ser) + L-serine + ATP = L-seryl-tRNA(Ser) + AMP + diphosphate + H(+). It carries out the reaction tRNA(Sec) + L-serine + ATP = L-seryl-tRNA(Sec) + AMP + diphosphate + H(+). It participates in aminoacyl-tRNA biosynthesis; selenocysteinyl-tRNA(Sec) biosynthesis; L-seryl-tRNA(Sec) from L-serine and tRNA(Sec): step 1/1. In terms of biological role, catalyzes the attachment of serine to tRNA(Ser). Is also able to aminoacylate tRNA(Sec) with serine, to form the misacylated tRNA L-seryl-tRNA(Sec), which will be further converted into selenocysteinyl-tRNA(Sec). The sequence is that of Serine--tRNA ligase from Clostridium botulinum (strain Okra / Type B1).